Reading from the N-terminus, the 88-residue chain is RNA-binding protein Hfq (88 aa).

One can recognise a Sm domain in the interval 9 to 68; it reads DPFLNALRRERIPVSIYLVNGIKLQGQIESFDQFVILLKNTVNQMVYKHAISTVVPARAV. The segment at 66-88 is disordered; it reads RAVSHHSASDRPQGERPQEKTEE. Positions 72 to 88 are enriched in basic and acidic residues; that stretch reads SASDRPQGERPQEKTEE.

It belongs to the Hfq family. Homohexamer.

In terms of biological role, RNA chaperone that binds small regulatory RNA (sRNAs) and mRNAs to facilitate mRNA translational regulation in response to envelope stress, environmental stress and changes in metabolite concentrations. Also binds with high specificity to tRNAs. The chain is RNA-binding protein Hfq from Aliivibrio fischeri (strain ATCC 700601 / ES114) (Vibrio fischeri).